The following is a 487-amino-acid chain: Cytochrome P450 2C4 (487 aa).

Cys-432 contacts heme.

The protein belongs to the cytochrome P450 family. Heme serves as cofactor.

It localises to the endoplasmic reticulum membrane. The protein resides in the microsome membrane. The catalysed reaction is an organic molecule + reduced [NADPH--hemoprotein reductase] + O2 = an alcohol + oxidized [NADPH--hemoprotein reductase] + H2O + H(+). In terms of biological role, cytochromes P450 are a group of heme-thiolate monooxygenases. In liver microsomes, this enzyme is involved in an NADPH-dependent electron transport pathway. It oxidizes a variety of structurally unrelated compounds, including steroids, fatty acids, and xenobiotics. The sequence is that of Cytochrome P450 2C4 (CYP2C4) from Oryctolagus cuniculus (Rabbit).